Here is an 84-residue protein sequence, read N- to C-terminus: Perlustrin (84 aa).

An IGFBP N-terminal domain is found at 1 to 82 (LSCASCENAA…LDFKGVCARV (82 aa)). 6 cysteine pairs are disulfide-bonded: cysteine 3-cysteine 28, cysteine 6-cysteine 30, cysteine 11-cysteine 31, cysteine 18-cysteine 34, cysteine 42-cysteine 55, and cysteine 49-cysteine 79.

In terms of tissue distribution, shell.

In terms of biological role, binds human IGF1 and IGF2 and bovine insulin. The protein is Perlustrin of Haliotis laevigata (Smooth Australian abalone).